We begin with the raw amino-acid sequence, 267 residues long: Digeranylgeranylglyceryl phosphate synthase (267 aa).

7 helical membrane passes run 10-30 (ANCVMAGAASLTGMLVSGALL), 33-53 (LHTPVLVFSAVLLITGGGNAI), 80-100 (AALIWSVALFIAGCLIAGLIN), 104-121 (LALALLNSFVLIIYAARL), 139-159 (TFLFGGLAASPSSITAFLSIL), 198-218 (VLASLVLIVAMLLSYLVPLGI), and 247-267 (QRWIKMGMGMALVAFLIGYHI).

Belongs to the UbiA prenyltransferase family. DGGGP synthase subfamily. Mg(2+) serves as cofactor.

It localises to the cell membrane. The catalysed reaction is sn-3-O-(geranylgeranyl)glycerol 1-phosphate + (2E,6E,10E)-geranylgeranyl diphosphate = 2,3-bis-O-(geranylgeranyl)-sn-glycerol 1-phosphate + diphosphate. Its pathway is membrane lipid metabolism; glycerophospholipid metabolism. Functionally, prenyltransferase that catalyzes the transfer of the geranylgeranyl moiety of geranylgeranyl diphosphate (GGPP) to the C2 hydroxyl of (S)-3-O-geranylgeranylglyceryl phosphate (GGGP). This reaction is the second ether-bond-formation step in the biosynthesis of archaeal membrane lipids. The polypeptide is Digeranylgeranylglyceryl phosphate synthase (Methanothrix thermoacetophila (strain DSM 6194 / JCM 14653 / NBRC 101360 / PT) (Methanosaeta thermophila)).